Here is a 289-residue protein sequence, read N- to C-terminus: ATP synthase gamma chain (289 aa).

It belongs to the ATPase gamma chain family. In terms of assembly, F-type ATPases have 2 components, CF(1) - the catalytic core - and CF(0) - the membrane proton channel. CF(1) has five subunits: alpha(3), beta(3), gamma(1), delta(1), epsilon(1). CF(0) has three main subunits: a, b and c.

It is found in the cell inner membrane. Functionally, produces ATP from ADP in the presence of a proton gradient across the membrane. The gamma chain is believed to be important in regulating ATPase activity and the flow of protons through the CF(0) complex. The sequence is that of ATP synthase gamma chain from Anaeromyxobacter dehalogenans (strain 2CP-C).